The chain runs to 138 residues: Large ribosomal subunit protein uL16 (138 aa).

The protein belongs to the universal ribosomal protein uL16 family. As to quaternary structure, part of the 50S ribosomal subunit.

Its function is as follows. Binds 23S rRNA and is also seen to make contacts with the A and possibly P site tRNAs. This Acidiphilium cryptum (strain JF-5) protein is Large ribosomal subunit protein uL16.